Consider the following 267-residue polypeptide: Cerberus (267 aa).

Residues 1 to 17 form the signal peptide; sequence MHLLLFQLLVLLPLGKT. 2 disordered regions span residues 19 to 52 and 87 to 113; these read RHQD…EAEE and WKKP…QSLI. N-linked (GlcNAc...) asparagine glycosylation is present at Asn-26. Over residues 88–101 the composition is skewed to basic and acidic residues; sequence KKPEREMHPSRDSD. Intrachain disulfides connect Cys-162-Cys-209, Cys-176-Cys-223, Cys-186-Cys-239, and Cys-190-Cys-241. Positions 162-246 constitute a CTCK domain; that stretch reads CRTVPFSQTI…EECQCKVKTE (85 aa). Asn-222 carries N-linked (GlcNAc...) asparagine glycosylation.

The protein belongs to the DAN family. As to quaternary structure, forms monomers and predominantly dimers. In terms of processing, N-glycosylated.

The protein resides in the secreted. In terms of biological role, cytokine that may play a role in anterior neural induction and somite formation during embryogenesis in part through a BMP-inhibitory mechanism. Can regulate Nodal signaling during gastrulation as well as the formation and patterning of the primitive streak. This chain is Cerberus (CER1), found in Homo sapiens (Human).